The primary structure comprises 118 residues: UPF0329 protein ECU03_0030/ECU05_0040/ECU06_0010/ECU06_1710/ECU11_0010 (118 aa).

It belongs to the UPF0329 family.

The chain is UPF0329 protein ECU03_0030/ECU05_0040/ECU06_0010/ECU06_1710/ECU11_0010 from Encephalitozoon cuniculi (strain GB-M1) (Microsporidian parasite).